A 910-amino-acid chain; its full sequence is Myelin regulatory factor-like protein (910 aa).

Positions 142–405 (GCSYPQQPLC…SNPGQFENDS (264 aa)) form a DNA-binding region, NDT80. Positions 189–208 (RSRSSEVQDPDSEGQNRMPT) are disordered. The 109-residue stretch at 451–559 (SDSRAKQNIQ…KLTNNLEERI (109 aa)) folds into the Peptidase S74 domain. A coiled-coil region spans residues 543 to 575 (GAVKQLCKLTNNLEERIEELEIWNRKLARLKRL). The chain crosses the membrane as a helical span at residues 628–648 (LVITLIAVMAFCALTIVALYI). Residues 661–682 (LPPSNITSSQEPALLPTASSSA) are disordered. A compositionally biased stretch (polar residues) spans 663–682 (PSNITSSQEPALLPTASSSA).

It belongs to the MRF family.

It localises to the membrane. The sequence is that of Myelin regulatory factor-like protein (MYRFL) from Homo sapiens (Human).